Reading from the N-terminus, the 73-residue chain is uncharacterized protein (73 aa).

This is an uncharacterized protein from Ureaplasma parvum serovar 3 (strain ATCC 700970).